We begin with the raw amino-acid sequence, 685 residues long: UvrABC system protein B (685 aa).

In terms of domain architecture, Helicase ATP-binding spans E39–V420. G52–T59 is a binding site for ATP. Residues Y105 to I128 carry the Beta-hairpin motif. The 154-residue stretch at Q443–I596 folds into the Helicase C-terminal domain. In terms of domain architecture, UVR spans A640–R675.

Belongs to the UvrB family. Forms a heterotetramer with UvrA during the search for lesions. Interacts with UvrC in an incision complex.

It is found in the cytoplasm. Its function is as follows. The UvrABC repair system catalyzes the recognition and processing of DNA lesions. A damage recognition complex composed of 2 UvrA and 2 UvrB subunits scans DNA for abnormalities. Upon binding of the UvrA(2)B(2) complex to a putative damaged site, the DNA wraps around one UvrB monomer. DNA wrap is dependent on ATP binding by UvrB and probably causes local melting of the DNA helix, facilitating insertion of UvrB beta-hairpin between the DNA strands. Then UvrB probes one DNA strand for the presence of a lesion. If a lesion is found the UvrA subunits dissociate and the UvrB-DNA preincision complex is formed. This complex is subsequently bound by UvrC and the second UvrB is released. If no lesion is found, the DNA wraps around the other UvrB subunit that will check the other stand for damage. The chain is UvrABC system protein B from Aromatoleum aromaticum (strain DSM 19018 / LMG 30748 / EbN1) (Azoarcus sp. (strain EbN1)).